The sequence spans 192 residues: Putative manganese efflux pump MntP (192 aa).

Helical transmembrane passes span Leu-3–Phe-23, Phe-38–Leu-58, Gly-61–Ile-81, Val-101–Val-121, Ile-130–Gly-150, and Ile-167–Trp-187.

This sequence belongs to the MntP (TC 9.B.29) family.

The protein resides in the cell membrane. Functionally, probably functions as a manganese efflux pump. The protein is Putative manganese efflux pump MntP of Methanospirillum hungatei JF-1 (strain ATCC 27890 / DSM 864 / NBRC 100397 / JF-1).